A 311-amino-acid polypeptide reads, in one-letter code: UDP-N-acetylenolpyruvoylglucosamine reductase (311 aa).

One can recognise an FAD-binding PCMH-type domain in the interval 28-197; sequence KIGGNARWLV…VSARFHLARG (170 aa). R177 is a catalytic residue. The active-site Proton donor is the S226. E296 is a catalytic residue.

Belongs to the MurB family. The cofactor is FAD.

The protein localises to the cytoplasm. The catalysed reaction is UDP-N-acetyl-alpha-D-muramate + NADP(+) = UDP-N-acetyl-3-O-(1-carboxyvinyl)-alpha-D-glucosamine + NADPH + H(+). It participates in cell wall biogenesis; peptidoglycan biosynthesis. Its function is as follows. Cell wall formation. This Magnetococcus marinus (strain ATCC BAA-1437 / JCM 17883 / MC-1) protein is UDP-N-acetylenolpyruvoylglucosamine reductase.